A 361-amino-acid polypeptide reads, in one-letter code: DNA replication and repair protein RecF (361 aa).

30–37 (GPNGSGKT) contributes to the ATP binding site.

The protein belongs to the RecF family.

The protein localises to the cytoplasm. In terms of biological role, the RecF protein is involved in DNA metabolism; it is required for DNA replication and normal SOS inducibility. RecF binds preferentially to single-stranded, linear DNA. It also seems to bind ATP. In Yersinia pestis, this protein is DNA replication and repair protein RecF.